Here is a 142-residue protein sequence, read N- to C-terminus: Nucleoside diphosphate kinase (142 aa).

ATP is bound by residues Lys-11, Phe-59, Arg-87, Thr-93, Arg-104, and Asn-114. His-117 serves as the catalytic Pros-phosphohistidine intermediate.

It belongs to the NDK family. In terms of assembly, homotetramer. Mg(2+) serves as cofactor.

It is found in the cytoplasm. It carries out the reaction a 2'-deoxyribonucleoside 5'-diphosphate + ATP = a 2'-deoxyribonucleoside 5'-triphosphate + ADP. The catalysed reaction is a ribonucleoside 5'-diphosphate + ATP = a ribonucleoside 5'-triphosphate + ADP. Functionally, major role in the synthesis of nucleoside triphosphates other than ATP. The ATP gamma phosphate is transferred to the NDP beta phosphate via a ping-pong mechanism, using a phosphorylated active-site intermediate. The sequence is that of Nucleoside diphosphate kinase from Dechloromonas aromatica (strain RCB).